A 170-amino-acid chain; its full sequence is Adenine phosphoribosyltransferase (170 aa).

This sequence belongs to the purine/pyrimidine phosphoribosyltransferase family. As to quaternary structure, homodimer.

It localises to the cytoplasm. It catalyses the reaction AMP + diphosphate = 5-phospho-alpha-D-ribose 1-diphosphate + adenine. It participates in purine metabolism; AMP biosynthesis via salvage pathway; AMP from adenine: step 1/1. Catalyzes a salvage reaction resulting in the formation of AMP, that is energically less costly than de novo synthesis. The protein is Adenine phosphoribosyltransferase of Maridesulfovibrio salexigens (strain ATCC 14822 / DSM 2638 / NCIMB 8403 / VKM B-1763) (Desulfovibrio salexigens).